Reading from the N-terminus, the 157-residue chain is Ribosomal RNA large subunit methyltransferase H (157 aa).

S-adenosyl-L-methionine contacts are provided by residues L73, G105, and 124 to 129; that span reads LSRMTF.

It belongs to the RNA methyltransferase RlmH family. As to quaternary structure, homodimer.

It localises to the cytoplasm. The enzyme catalyses pseudouridine(1915) in 23S rRNA + S-adenosyl-L-methionine = N(3)-methylpseudouridine(1915) in 23S rRNA + S-adenosyl-L-homocysteine + H(+). Specifically methylates the pseudouridine at position 1915 (m3Psi1915) in 23S rRNA. This is Ribosomal RNA large subunit methyltransferase H from Porphyromonas gingivalis (strain ATCC BAA-308 / W83).